Consider the following 204-residue polypeptide: Small ribosomal subunit protein uS4 (204 aa).

The S4 RNA-binding domain occupies 95–157 (RRLDNTVFRM…KGIHSIIRHN (63 aa)).

Belongs to the universal ribosomal protein uS4 family. As to quaternary structure, part of the 30S ribosomal subunit. Contacts protein S5. The interaction surface between S4 and S5 is involved in control of translational fidelity.

Functionally, one of the primary rRNA binding proteins, it binds directly to 16S rRNA where it nucleates assembly of the body of the 30S subunit. In terms of biological role, with S5 and S12 plays an important role in translational accuracy. This is Small ribosomal subunit protein uS4 from Treponema pallidum (strain Nichols).